Consider the following 337-residue polypeptide: MALARWLWVVAGLVVTIVAIGGITRLTESGLSITHWSVVSGILPPLSESAWQAEFDLYRQTGEYRLESGPAGMDLAAFKFIYFWEWFHRILGRVIGLAFLLPMMWFWIRGMIPAGYRGRLLALFALICGQGALGWYMVASGVGTDLTDVSHFRLSAHLLTALFLLAGLVWTALDLRRLARVPDARPARFTGVAWMASIILFIQILLGAWVAGLNAGHASYSWPMMNGGLLPQPDLTRGWLWALTHDPFLLHFLHRWWAWVAVIALVVLARKVRPFDRRASIAVHSAFGTMVVLGIATVLSEVSLWIAVAHQLTGALLVISTAWAAHAIGTARKTEAA.

The next 7 helical transmembrane spans lie at 3-23, 94-114, 120-140, 154-174, 191-211, 248-268, and 289-309; these read LARW…IGGI, VIGL…MIPA, LLAL…MVAS, LSAH…TALD, GVAW…AWVA, FLLH…LVVL, and TMVV…IAVA. Residue H254 participates in heme binding. H310 is a binding site for heme. The chain crosses the membrane as a helical span at residues 311 to 331; the sequence is QLTGALLVISTAWAAHAIGTA.

Belongs to the COX15/CtaA family. Type 2 subfamily. As to quaternary structure, interacts with CtaB. It depends on heme b as a cofactor.

It is found in the cell membrane. It carries out the reaction Fe(II)-heme o + 2 A + H2O = Fe(II)-heme a + 2 AH2. The protein operates within porphyrin-containing compound metabolism; heme A biosynthesis; heme A from heme O: step 1/1. Its function is as follows. Catalyzes the conversion of heme O to heme A by two successive hydroxylations of the methyl group at C8. The first hydroxylation forms heme I, the second hydroxylation results in an unstable dihydroxymethyl group, which spontaneously dehydrates, resulting in the formyl group of heme A. This chain is Heme A synthase, found in Erythrobacter litoralis (strain HTCC2594).